The following is a 2225-amino-acid chain: Multifunctional protein CAD (2225 aa).

A2 carries the N-acetylalanine modification. Residues 2–365 (AALVLEDGSV…TVKEATAGNP (364 aa)) are GATase (Glutamine amidotransferase). Residues S44, G222, and G224 each coordinate L-glutamine. The 187-residue stretch at 177-363 (RILALDCGLK…LETVKEATAG (187 aa)) folds into the Glutamine amidotransferase type-1 domain. C252 (nucleophile; for GATase activity) is an active-site residue. L-glutamine-binding residues include L253, Q256, N294, G296, and F297. Residues H336 and E338 each act as for GATase activity in the active site. The tract at residues 366–394 (GGQTVRERLTERLCPPGIPTPGSGLPPPR) is linker. Positions 395-933 (KVLILGSGGL…TTHDLTFRTP (539 aa)) are CPSase A. Positions 395–1455 (KVLILGSGGL…APPLKVHVDC (1061 aa)) are CPSase (Carbamoyl phosphate synthase). Phosphothreonine; by MAPK1 is present on T456. ATP is bound by residues R515, R555, G561, G562, K592, E599, G625, I626, H627, Q668, and E682. One can recognise an ATP-grasp 1 domain in the interval 519-711 (AARMAEIGEH…LAYVAAKLAL (193 aa)). Q668, E682, and N684 together coordinate Mg(2+). Positions 668, 682, and 684 each coordinate Mn(2+). Position 747 is an N6-acetyllysine (K747). Residues 934 to 1455 (HVLVLGSGVY…APPLKVHVDC (522 aa)) form a CPSase B region. A Phosphoserine modification is found at S1038. The region spanning 1052 to 1243 (SRLLDTIGIS…LVALATRVIM (192 aa)) is the ATP-grasp 2 domain. Residues R1088, K1127, I1129, E1134, G1159, V1160, H1161, S1162, Q1202, and E1214 each contribute to the ATP site. Mg(2+) is bound by residues Q1202, E1214, and N1216. Positions 1202, 1214, and 1216 each coordinate Mn(2+). Residues 1308-1462 (FKIPKKNILL…VDCMTSQKLV (155 aa)) form the MGS-like domain. S1406 bears the Phosphoserine; by PKA mark. The residue at position 1411 (K1411) is an N6-acetyllysine. Residues 1456-1788 (MTSQKLVRLP…VKGTVRRVVL (333 aa)) form a DHOase (dihydroorotase) region. Positions 1471 and 1473 each coordinate Zn(2+). Residues R1475 and N1505 each contribute to the (S)-dihydroorotate site. The Zn(2+) site is built by K1556, H1590, C1613, H1614, and E1637. K1556 carries the N6-carboxylysine modification. R1661 provides a ligand contact to (S)-dihydroorotate. D1686 provides a ligand contact to Zn(2+). The For DHOase activity role is filled by D1686. (S)-dihydroorotate contacts are provided by H1690 and P1702. The tract at residues 1789–1917 (RGEVAYIDGQ…GLLHPQTSPL (129 aa)) is linker. A disordered region spans residues 1811 to 1899 (KWPQGAVPQL…YPPPPVPRQA (89 aa)). Residues 1825–1834 (PATSEMTTTP) show a composition bias toward polar residues. At S1859 the chain carries Phosphoserine; by RPS6KB1 and PKA. The span at 1866 to 1878 (EEPKEKSSRKVAE) shows a compositional bias: basic and acidic residues. At S1873 the chain carries Phosphoserine; by PKC; in vitro. T1884 carries the post-translational modification Phosphothreonine. S1900 and S1938 each carry phosphoserine. The tract at residues 1918 to 2225 (LHSLVGQHIL…ALLATVLGRF (308 aa)) is ATCase (Aspartate transcarbamylase). Carbamoyl phosphate is bound by residues R1975 and T1976. Position 2003 (K2003) interacts with L-aspartate. R2024, H2052, and Q2055 together coordinate carbamoyl phosphate. L-aspartate is bound by residues R2085 and R2146. Residues M2185 and P2186 each coordinate carbamoyl phosphate.

It in the N-terminal section; belongs to the CarA family. The protein in the 2nd section; belongs to the CarB family. This sequence in the 3rd section; belongs to the metallo-dependent hydrolases superfamily. DHOase family. CAD subfamily. In the C-terminal section; belongs to the aspartate/ornithine carbamoyltransferase superfamily. ATCase family. In terms of assembly, homohexamer. Interacts with CIPC. The cofactor is Zn(2+). Mg(2+) is required as a cofactor. Mn(2+) serves as cofactor. Post-translationally, activated by MAP kinase (Erk1/2) phosphorylation just prior to the S phase of the cell cycle, when the demand for pyrimidine nucleotides is greatest, and down-regulated as the cells emerge from S phase by protein kinase A (PKA) phosphorylation. Phosphorylation at Ser-1859 by RPS6KB1 downstream of MTOR promotes oligomerization and stimulates dihydroorotase activity. Phosphorylation at Ser-1406 reduces sensitivity to feedback inhibition by UTP.

Its subcellular location is the cytoplasm. It is found in the nucleus. The enzyme catalyses hydrogencarbonate + L-glutamine + 2 ATP + H2O = carbamoyl phosphate + L-glutamate + 2 ADP + phosphate + 2 H(+). It catalyses the reaction L-glutamine + H2O = L-glutamate + NH4(+). The catalysed reaction is hydrogencarbonate + NH4(+) + 2 ATP = carbamoyl phosphate + 2 ADP + phosphate + 2 H(+). It carries out the reaction carbamoyl phosphate + L-aspartate = N-carbamoyl-L-aspartate + phosphate + H(+). The enzyme catalyses (S)-dihydroorotate + H2O = N-carbamoyl-L-aspartate + H(+). It participates in pyrimidine metabolism; UMP biosynthesis via de novo pathway; (S)-dihydroorotate from bicarbonate: step 1/3. Its pathway is pyrimidine metabolism; UMP biosynthesis via de novo pathway; (S)-dihydroorotate from bicarbonate: step 2/3. It functions in the pathway pyrimidine metabolism; UMP biosynthesis via de novo pathway; (S)-dihydroorotate from bicarbonate: step 3/3. Its activity is regulated as follows. Allosterically regulated and controlled by phosphorylation. 5-phosphoribose 1-diphosphate (PRPP) is an activator while UMP and UTP are inhibitors of the CPSase reaction. In terms of biological role, multifunctional protein that encodes the first 3 enzymatic activities of the de novo pyrimidine pathway: carbamoylphosphate synthetase (CPSase; EC 6.3.5.5), aspartate transcarbamylase (ATCase; EC 2.1.3.2) and dihydroorotase (DHOase; EC 3.5.2.3). The CPSase-function is accomplished in 2 steps, by a glutamine-dependent amidotransferase activity (GATase) that binds and cleaves glutamine to produce ammonia, followed by an ammonium-dependent carbamoyl phosphate synthetase, which reacts with the ammonia, hydrogencarbonate and ATP to form carbamoyl phosphate. The endogenously produced carbamoyl phosphate is sequestered and channeled to the ATCase active site. ATCase then catalyzes the formation of carbamoyl-L-aspartate from L-aspartate and carbamoyl phosphate. In the last step, DHOase catalyzes the cyclization of carbamoyl aspartate to dihydroorotate. The protein is Multifunctional protein CAD of Homo sapiens (Human).